The primary structure comprises 174 residues: uncharacterized protein (174 aa).

This is an uncharacterized protein from Methanocaldococcus jannaschii (strain ATCC 43067 / DSM 2661 / JAL-1 / JCM 10045 / NBRC 100440) (Methanococcus jannaschii).